Reading from the N-terminus, the 202-residue chain is Ras-related protein Rab-2B (202 aa).

31–38 provides a ligand contact to GTP; it reads GDSAVGKS. An Effector region motif is present at residues 53-61; that stretch reads SDFTIGVEF. GTP-binding positions include 79 to 83 and 137 to 140; these read DTAGQ and NKAD.

It belongs to the small GTPase superfamily. Rab family. Post-translationally, this sequence lacks the C-terminal cysteine motifs subject to isoprenylation in other Rab proteins.

The polypeptide is Ras-related protein Rab-2B (rab2B) (Dictyostelium discoideum (Social amoeba)).